Consider the following 137-residue polypeptide: S-adenosylmethionine decarboxylase proenzyme (137 aa).

The active-site Schiff-base intermediate with substrate; via pyruvic acid is the Ser63. Ser63 bears the Pyruvic acid (Ser); by autocatalysis mark. The active-site Proton acceptor; for processing activity is His68. Cys83 functions as the Proton donor; for catalytic activity in the catalytic mechanism.

It belongs to the prokaryotic AdoMetDC family. Type 1 subfamily. In terms of assembly, heterotetramer of two alpha and two beta chains arranged as a dimer of alpha/beta heterodimers. Pyruvate serves as cofactor. Is synthesized initially as an inactive proenzyme. Formation of the active enzyme involves a self-maturation process in which the active site pyruvoyl group is generated from an internal serine residue via an autocatalytic post-translational modification. Two non-identical subunits are generated from the proenzyme in this reaction, and the pyruvate is formed at the N-terminus of the alpha chain, which is derived from the carboxyl end of the proenzyme. The post-translation cleavage follows an unusual pathway, termed non-hydrolytic serinolysis, in which the side chain hydroxyl group of the serine supplies its oxygen atom to form the C-terminus of the beta chain, while the remainder of the serine residue undergoes an oxidative deamination to produce ammonia and the pyruvoyl group blocking the N-terminus of the alpha chain.

The catalysed reaction is S-adenosyl-L-methionine + H(+) = S-adenosyl 3-(methylsulfanyl)propylamine + CO2. It participates in amine and polyamine biosynthesis; S-adenosylmethioninamine biosynthesis; S-adenosylmethioninamine from S-adenosyl-L-methionine: step 1/1. In terms of biological role, catalyzes the decarboxylation of S-adenosylmethionine to S-adenosylmethioninamine (dcAdoMet), the propylamine donor required for the synthesis of the polyamines spermine and spermidine from the diamine putrescine. In Fervidobacterium nodosum (strain ATCC 35602 / DSM 5306 / Rt17-B1), this protein is S-adenosylmethionine decarboxylase proenzyme.